The chain runs to 297 residues: Mycothiol acetyltransferase (297 aa).

1D-myo-inositol 2-(L-cysteinylamino)-2-deoxy-alpha-D-glucopyranoside is bound at residue E35. 73–75 (MLV) provides a ligand contact to acetyl-CoA. One can recognise an N-acetyltransferase domain in the interval 155 to 297 (LRTFGGTEAE…VAVHAQYGIP (143 aa)). The 1D-myo-inositol 2-(L-cysteinylamino)-2-deoxy-alpha-D-glucopyranoside site is built by E181, K222, and E230. Acetyl-CoA contacts are provided by residues 234 to 236 (LGV) and 241 to 247 (QGRGLGR). Y268 lines the 1D-myo-inositol 2-(L-cysteinylamino)-2-deoxy-alpha-D-glucopyranoside pocket.

This sequence belongs to the acetyltransferase family. MshD subfamily. In terms of assembly, monomer.

It catalyses the reaction 1D-myo-inositol 2-(L-cysteinylamino)-2-deoxy-alpha-D-glucopyranoside + acetyl-CoA = mycothiol + CoA + H(+). Its function is as follows. Catalyzes the transfer of acetyl from acetyl-CoA to desacetylmycothiol (Cys-GlcN-Ins) to form mycothiol. The sequence is that of Mycothiol acetyltransferase from Beutenbergia cavernae (strain ATCC BAA-8 / DSM 12333 / CCUG 43141 / JCM 11478 / NBRC 16432 / NCIMB 13614 / HKI 0122).